We begin with the raw amino-acid sequence, 244 residues long: 1-(5-phosphoribosyl)-5-[(5-phosphoribosylamino)methylideneamino] imidazole-4-carboxamide isomerase (244 aa).

The Proton acceptor role is filled by Asp10. The active-site Proton donor is Asp129.

The protein belongs to the HisA/HisF family.

It is found in the cytoplasm. It catalyses the reaction 1-(5-phospho-beta-D-ribosyl)-5-[(5-phospho-beta-D-ribosylamino)methylideneamino]imidazole-4-carboxamide = 5-[(5-phospho-1-deoxy-D-ribulos-1-ylimino)methylamino]-1-(5-phospho-beta-D-ribosyl)imidazole-4-carboxamide. The protein operates within amino-acid biosynthesis; L-histidine biosynthesis; L-histidine from 5-phospho-alpha-D-ribose 1-diphosphate: step 4/9. This is 1-(5-phosphoribosyl)-5-[(5-phosphoribosylamino)methylideneamino] imidazole-4-carboxamide isomerase from Rhodococcus jostii (strain RHA1).